The primary structure comprises 80 residues: Conotoxin Pu11.1 (80 aa).

An N-terminal signal peptide occupies residues 1-19 (MKLVLAIVLILMLLSLSTG). The propeptide occupies 20-42 (AEMSDNHASRSATALTDRLLGPK). Cystine bridges form between cysteine 46–cysteine 60, cysteine 53–cysteine 65, cysteine 59–cysteine 72, and cysteine 64–cysteine 79.

This sequence belongs to the conotoxin I3 superfamily. As to expression, expressed by the venom duct.

Its subcellular location is the secreted. This chain is Conotoxin Pu11.1, found in Conus pulicarius (Flea-bitten cone).